Here is a 506-residue protein sequence, read N- to C-terminus: Maturase K (506 aa).

This sequence belongs to the intron maturase 2 family. MatK subfamily.

It is found in the plastid. It localises to the chloroplast. Its function is as follows. Usually encoded in the trnK tRNA gene intron. Probably assists in splicing its own and other chloroplast group II introns. The polypeptide is Maturase K (Calluna vulgaris (Heather)).